The primary structure comprises 77 residues: Acyl carrier protein (77 aa).

Residues 1 to 76 (MATFDDVKAV…DVVNYIDNLK (76 aa)) form the Carrier domain. An O-(pantetheine 4'-phosphoryl)serine modification is found at S36.

It belongs to the acyl carrier protein (ACP) family. 4'-phosphopantetheine is transferred from CoA to a specific serine of apo-ACP by AcpS. This modification is essential for activity because fatty acids are bound in thioester linkage to the sulfhydryl of the prosthetic group.

It localises to the cytoplasm. The protein operates within lipid metabolism; fatty acid biosynthesis. Carrier of the growing fatty acid chain in fatty acid biosynthesis. In Campylobacter jejuni subsp. doylei (strain ATCC BAA-1458 / RM4099 / 269.97), this protein is Acyl carrier protein.